Here is a 189-residue protein sequence, read N- to C-terminus: Protein Flattop (189 aa).

The segment at 112–189 (EISGKPFDPD…PPPSPCKSTK (78 aa)) is disordered. Residues 137 to 148 (APNPTIIPSSPV) show a composition bias toward polar residues. The segment covering 178–189 (NNPPPSPCKSTK) has biased composition (pro residues).

This sequence belongs to the Flattop family. Microtubule inner protein component of sperm flagellar doublet microtubules. Interacts with DLG3. In terms of tissue distribution, expressed in mono- and multiciliated tissues during planar cell polarity acquisition.

It is found in the cytoplasm. The protein resides in the cytoskeleton. The protein localises to the cilium basal body. Its subcellular location is the cilium axoneme. It localises to the flagellum axoneme. It is found in the apical cell membrane. In terms of biological role, microtubule inner protein (MIP) part of the dynein-decorated doublet microtubules (DMTs) in cilia axoneme. Acts as a regulator of cilium basal body docking and positioning in mono- and multiciliated cells. Regulates basal body docking and cilia formation in multiciliated lung cells. Regulates kinocilium positioning and stereocilia bundle morphogenesis in the inner ear. The polypeptide is Protein Flattop (Mus musculus (Mouse)).